The primary structure comprises 144 residues: MYLNTISPMKKSNHSSKRKGRGIGSGKGKTSGRGHKGQRSRSGGKVRRGFEGGQMPLYRRLPKFGHNKSKKSFFKKEIKLSEFMKIKDSFIDLIVLKKNKIINSKIKIVKIIFSKNFNKKINIKNLKVSKNAKKEIEFFGGTIN.

The segment at 1-52 is disordered; the sequence is MYLNTISPMKKSNHSSKRKGRGIGSGKGKTSGRGHKGQRSRSGGKVRRGFEG. 2 stretches are compositionally biased toward basic residues: residues 11 to 21 and 30 to 47; these read KSNHSSKRKGR and TSGRGHKGQRSRSGGKVR.

This sequence belongs to the universal ribosomal protein uL15 family. In terms of assembly, part of the 50S ribosomal subunit.

Its function is as follows. Binds to the 23S rRNA. The sequence is that of Large ribosomal subunit protein uL15 from Wigglesworthia glossinidia brevipalpis.